We begin with the raw amino-acid sequence, 186 residues long: Peptide deformylase (186 aa).

Fe cation is bound by residues Cys-94 and His-136. The active site involves Glu-137. His-140 is a binding site for Fe cation.

Belongs to the polypeptide deformylase family. Requires Fe(2+) as cofactor.

It carries out the reaction N-terminal N-formyl-L-methionyl-[peptide] + H2O = N-terminal L-methionyl-[peptide] + formate. Removes the formyl group from the N-terminal Met of newly synthesized proteins. Requires at least a dipeptide for an efficient rate of reaction. N-terminal L-methionine is a prerequisite for activity but the enzyme has broad specificity at other positions. The polypeptide is Peptide deformylase (Prosthecochloris aestuarii (strain DSM 271 / SK 413)).